The sequence spans 402 residues: N-acetyllactosaminide beta-1,6-N-acetylglucosaminyl-transferase (402 aa).

Topologically, residues 1-7 (MMGSWKH) are cytoplasmic. A helical; Signal-anchor for type II membrane protein membrane pass occupies residues 8–23 (CLFSASLISALIFVFV). The Lumenal segment spans residues 24–400 (YNTELWENKR…QSETAIQPSW (377 aa)). An N-linked (GlcNAc...) asparagine glycan is attached at Asn-41.

Belongs to the glycosyltransferase 14 family. Expressed in lens epithelium cells. In terms of tissue distribution, expressed in reticulocytes.

The protein resides in the golgi apparatus membrane. It catalyses the reaction a beta-D-Gal-(1-&gt;4)-beta-D-GlcNAc-(1-&gt;3)-beta-D-Gal-(1-&gt;4)-beta-D-GlcNAc derivative + UDP-N-acetyl-alpha-D-glucosamine = a beta-D-Gal-(1-&gt;4)-beta-D-GlcNAc-(1-&gt;3)-[beta-D-GlcNAc-(1-&gt;6)]-beta-D-Gal-(1-&gt;4)-N-acetyl-beta-D-glucosaminyl derivative + UDP + H(+). It functions in the pathway protein modification; protein glycosylation. Branching enzyme that converts linear into branched poly-N-acetyllactosaminoglycans. Introduces the blood group I antigen during embryonic development. It is closely associated with the development and maturation of erythroid cells. Its function is as follows. Determines the expression of the blood group I antigen in erythrocytes. In Homo sapiens (Human), this protein is N-acetyllactosaminide beta-1,6-N-acetylglucosaminyl-transferase (GCNT2).